Here is a 286-residue protein sequence, read N- to C-terminus: Bifunctional protein FolD (286 aa).

NADP(+) contacts are provided by residues 164-166 (GTS) and isoleucine 230.

This sequence belongs to the tetrahydrofolate dehydrogenase/cyclohydrolase family. Homodimer.

It carries out the reaction (6R)-5,10-methylene-5,6,7,8-tetrahydrofolate + NADP(+) = (6R)-5,10-methenyltetrahydrofolate + NADPH. It catalyses the reaction (6R)-5,10-methenyltetrahydrofolate + H2O = (6R)-10-formyltetrahydrofolate + H(+). It participates in one-carbon metabolism; tetrahydrofolate interconversion. Functionally, catalyzes the oxidation of 5,10-methylenetetrahydrofolate to 5,10-methenyltetrahydrofolate and then the hydrolysis of 5,10-methenyltetrahydrofolate to 10-formyltetrahydrofolate. The protein is Bifunctional protein FolD of Mesoplasma florum (strain ATCC 33453 / NBRC 100688 / NCTC 11704 / L1) (Acholeplasma florum).